Consider the following 112-residue polypeptide: Small ribosomal subunit protein uS17 (112 aa).

This sequence belongs to the universal ribosomal protein uS17 family. As to quaternary structure, part of the 30S ribosomal subunit.

Its function is as follows. One of the primary rRNA binding proteins, it binds specifically to the 5'-end of 16S ribosomal RNA. The sequence is that of Small ribosomal subunit protein uS17 from Thermotoga neapolitana (strain ATCC 49049 / DSM 4359 / NBRC 107923 / NS-E).